The chain runs to 313 residues: MTRKFKAAIIGSGNIGTDLMIKIMRHGRHIEVGAMVGIDPASDGLARASRLGVGTTHEGVEGLTRLPIFEEIDFVFDATSAGAHVHNDALLRKYKPGIRVIDLTPAAIGPYCIPVVNGKQNLDALNVNMVTCGGQATVPMVAAVSRVTQVHYGEIVASIASKSAGPGTRANIDEFTETTSKAIEVVGGASKGKAIIVLNPADPPLIMRDTVYTLSDVADEAAIADSVARMAADVQSYVPGYRLKQTVQFDRVENLNVPGVGRISGLKTSIFLEVEGAAHYLPAYAGNLDIMTSAGLRTAEQMAARMTAGTVAA.

Residue 12-15 coordinates NAD(+); the sequence is SGNI. The active-site Acyl-thioester intermediate is Cys132. NAD(+) contacts are provided by residues 163-171 and Asn287; that span reads SAGPGTRAN.

Belongs to the acetaldehyde dehydrogenase family.

It catalyses the reaction acetaldehyde + NAD(+) + CoA = acetyl-CoA + NADH + H(+). The polypeptide is Acetaldehyde dehydrogenase 2 (amnH) (Paraburkholderia xenovorans (strain LB400)).